We begin with the raw amino-acid sequence, 393 residues long: NAD(P)H-quinone oxidoreductase subunit H, chloroplastic (393 aa).

This sequence belongs to the complex I 49 kDa subunit family. As to quaternary structure, NDH is composed of at least 16 different subunits, 5 of which are encoded in the nucleus.

Its subcellular location is the plastid. It localises to the chloroplast thylakoid membrane. It catalyses the reaction a plastoquinone + NADH + (n+1) H(+)(in) = a plastoquinol + NAD(+) + n H(+)(out). It carries out the reaction a plastoquinone + NADPH + (n+1) H(+)(in) = a plastoquinol + NADP(+) + n H(+)(out). NDH shuttles electrons from NAD(P)H:plastoquinone, via FMN and iron-sulfur (Fe-S) centers, to quinones in the photosynthetic chain and possibly in a chloroplast respiratory chain. The immediate electron acceptor for the enzyme in this species is believed to be plastoquinone. Couples the redox reaction to proton translocation, and thus conserves the redox energy in a proton gradient. The polypeptide is NAD(P)H-quinone oxidoreductase subunit H, chloroplastic (Eucalyptus globulus subsp. globulus (Tasmanian blue gum)).